Reading from the N-terminus, the 271-residue chain is Fatty acid elongase A (271 aa).

The next 7 helical transmembrane spans lie at 35-55 (ILFPIVCSFGYLALIYGLQIF), 68-88 (AMFHNLFLCLLSLLMFLGIVI), 102-122 (IICKPIDSGLVQFSYYIFYLS), 139-159 (SLLFLHVWHHFITLWLVWANL), 165-185 (CQWVDISANCFVHIVMYFYYF), 198-220 (HITTCQIIQFIVDMSSHLAWHFY), and 237-257 (TSAFSDFVILSFLGLFIQFFV).

Belongs to the ELO family.

The protein localises to the membrane. The catalysed reaction is a very-long-chain acyl-CoA + malonyl-CoA + H(+) = a very-long-chain 3-oxoacyl-CoA + CO2 + CoA. In terms of biological role, fatty acid elongase with strict substrate specificity for monounsaturated fatty acids, in particular 16:1 (delta-9) to produce the unusual 18:1 (delta-11) fatty acid. The chain is Fatty acid elongase A (eloA) from Dictyostelium discoideum (Social amoeba).